A 180-amino-acid chain; its full sequence is CDP-archaeol synthase (180 aa).

5 consecutive transmembrane segments (helical) span residues 5-25, 54-74, 78-98, 118-138, and 142-162; these read LVATAFWAMLPAYVPNNAAVL, AVGTLTGVVLALALNRIAEPA, LGVDLPTFALPAAFALAFGAM, AFPGLDQLDFVVVALAAVFVV, and WALAVFTPSVLVVVLVMTPIL.

Belongs to the CDP-archaeol synthase family. The cofactor is Mg(2+).

It localises to the cell membrane. The enzyme catalyses 2,3-bis-O-(geranylgeranyl)-sn-glycerol 1-phosphate + CTP + H(+) = CDP-2,3-bis-O-(geranylgeranyl)-sn-glycerol + diphosphate. The protein operates within membrane lipid metabolism; glycerophospholipid metabolism. Its function is as follows. Catalyzes the formation of CDP-2,3-bis-(O-geranylgeranyl)-sn-glycerol (CDP-archaeol) from 2,3-bis-(O-geranylgeranyl)-sn-glycerol 1-phosphate (DGGGP) and CTP. This reaction is the third ether-bond-formation step in the biosynthesis of archaeal membrane lipids. The chain is CDP-archaeol synthase from Halorubrum lacusprofundi (strain ATCC 49239 / DSM 5036 / JCM 8891 / ACAM 34).